Reading from the N-terminus, the 142-residue chain is MAVERTLSIIKPDAVAKNVIGEIYSRFEKAGLRIVAAKMLHLSQEQAEGFYAEHKERGFFPDLVAFMTSGPVVVQALEGENAIALNRQLMGATNPKEAEPGTIRADFASSIDANAVHGSDSAASAEREVAYFFSENEICPRS.

6 residues coordinate ATP: Lys-11, Phe-59, Arg-87, Thr-93, Arg-104, and Asn-114. His-117 (pros-phosphohistidine intermediate) is an active-site residue.

This sequence belongs to the NDK family. In terms of assembly, homotetramer. The cofactor is Mg(2+).

The protein resides in the cytoplasm. It carries out the reaction a 2'-deoxyribonucleoside 5'-diphosphate + ATP = a 2'-deoxyribonucleoside 5'-triphosphate + ADP. It catalyses the reaction a ribonucleoside 5'-diphosphate + ATP = a ribonucleoside 5'-triphosphate + ADP. In terms of biological role, major role in the synthesis of nucleoside triphosphates other than ATP. The ATP gamma phosphate is transferred to the NDP beta phosphate via a ping-pong mechanism, using a phosphorylated active-site intermediate. The chain is Nucleoside diphosphate kinase from Hahella chejuensis (strain KCTC 2396).